The primary structure comprises 405 residues: Tryptophan synthase beta chain (405 aa).

Lys-98 carries the N6-(pyridoxal phosphate)lysine modification.

The protein belongs to the TrpB family. Tetramer of two alpha and two beta chains. Pyridoxal 5'-phosphate is required as a cofactor.

The catalysed reaction is (1S,2R)-1-C-(indol-3-yl)glycerol 3-phosphate + L-serine = D-glyceraldehyde 3-phosphate + L-tryptophan + H2O. Its pathway is amino-acid biosynthesis; L-tryptophan biosynthesis; L-tryptophan from chorismate: step 5/5. The beta subunit is responsible for the synthesis of L-tryptophan from indole and L-serine. This chain is Tryptophan synthase beta chain, found in Parvibaculum lavamentivorans (strain DS-1 / DSM 13023 / NCIMB 13966).